Reading from the N-terminus, the 159-residue chain is Phosphopantetheine adenylyltransferase (159 aa).

T10 contributes to the substrate binding site. ATP contacts are provided by residues 10–11 (TF) and H18. Positions 42, 74, and 88 each coordinate substrate. ATP is bound by residues 89 to 91 (GLR), E99, and 124 to 130 (WSFISSS).

It belongs to the bacterial CoaD family. In terms of assembly, homohexamer. The cofactor is Mg(2+).

The protein resides in the cytoplasm. The enzyme catalyses (R)-4'-phosphopantetheine + ATP + H(+) = 3'-dephospho-CoA + diphosphate. It functions in the pathway cofactor biosynthesis; coenzyme A biosynthesis; CoA from (R)-pantothenate: step 4/5. Its function is as follows. Reversibly transfers an adenylyl group from ATP to 4'-phosphopantetheine, yielding dephospho-CoA (dPCoA) and pyrophosphate. The protein is Phosphopantetheine adenylyltransferase of Klebsiella pneumoniae subsp. pneumoniae (strain ATCC 700721 / MGH 78578).